We begin with the raw amino-acid sequence, 975 residues long: Translation initiation factor IF-2 (975 aa).

2 stretches are compositionally biased toward basic and acidic residues: residues 48-63 (DHLR…DKRK) and 120-177 (AELK…EAAA). Disordered stretches follow at residues 48–85 (DHLR…KART) and 98–390 (KRDD…PTEP). The span at 178–211 (KRAAAAQAEAAQQAAAAREQAQRAQSEPAEQSAQ) shows a compositional bias: low complexity. Residues 212 to 263 (DEARAAAERAAQREAAKKAEDAAREAADKARAEQEEIRKRREAAEAEARAIR) show a composition bias toward basic and acidic residues. The span at 302–330 (KPAGEAAAARPAAKKPASGAPAPAAAPAG) shows a compositional bias: low complexity. Residues 359–372 (SSGGVDRGWRGGPK) are compositionally biased toward gly residues. One can recognise a tr-type G domain in the interval 475–644 (PRPPVVTVMG…LLQAEVLELK (170 aa)). The interval 484–491 (GHVDHGKT) is G1. 484 to 491 (GHVDHGKT) contacts GTP. The segment at 509-513 (GITQH) is G2. The segment at 530 to 533 (DTPG) is G3. Residues 530–534 (DTPGH) and 584–587 (NKID) each bind GTP. The segment at 584-587 (NKID) is G4. The G5 stretch occupies residues 620–622 (SAK).

The protein belongs to the TRAFAC class translation factor GTPase superfamily. Classic translation factor GTPase family. IF-2 subfamily.

Its subcellular location is the cytoplasm. Functionally, one of the essential components for the initiation of protein synthesis. Protects formylmethionyl-tRNA from spontaneous hydrolysis and promotes its binding to the 30S ribosomal subunits. Also involved in the hydrolysis of GTP during the formation of the 70S ribosomal complex. This is Translation initiation factor IF-2 from Burkholderia pseudomallei (strain 1106a).